Here is a 289-residue protein sequence, read N- to C-terminus: Pantothenate synthetase (289 aa).

28–35 contributes to the ATP binding site; that stretch reads MGCLHEGH. The Proton donor role is filled by His35. (R)-pantoate is bound at residue Gln59. Gln59 contributes to the beta-alanine binding site. 147 to 150 is an ATP binding site; that stretch reads GLKD. Gln153 lines the (R)-pantoate pocket. ATP contacts are provided by residues Val176 and 184-187; that span reads MSSR.

It belongs to the pantothenate synthetase family. As to quaternary structure, homodimer.

It is found in the cytoplasm. The catalysed reaction is (R)-pantoate + beta-alanine + ATP = (R)-pantothenate + AMP + diphosphate + H(+). It participates in cofactor biosynthesis; (R)-pantothenate biosynthesis; (R)-pantothenate from (R)-pantoate and beta-alanine: step 1/1. Functionally, catalyzes the condensation of pantoate with beta-alanine in an ATP-dependent reaction via a pantoyl-adenylate intermediate. The chain is Pantothenate synthetase from Magnetococcus marinus (strain ATCC BAA-1437 / JCM 17883 / MC-1).